A 198-amino-acid chain; its full sequence is NADH-quinone oxidoreductase subunit B (198 aa).

Residues 1–20 are compositionally biased toward polar residues; it reads MGLNPTQVSTSGSPQVSQPA. The disordered stretch occupies residues 1–29; sequence MGLNPTQVSTSGSPQVSQPATGVLDPRTG. 4 residues coordinate [4Fe-4S] cluster: Cys77, Cys78, Cys142, and Cys172.

The protein belongs to the complex I 20 kDa subunit family. NDH-1 is composed of 14 different subunits. Subunits NuoB, C, D, E, F, and G constitute the peripheral sector of the complex. [4Fe-4S] cluster serves as cofactor.

The protein localises to the cell inner membrane. It catalyses the reaction a quinone + NADH + 5 H(+)(in) = a quinol + NAD(+) + 4 H(+)(out). Its function is as follows. NDH-1 shuttles electrons from NADH, via FMN and iron-sulfur (Fe-S) centers, to quinones in the respiratory chain. The immediate electron acceptor for the enzyme in this species is believed to be ubiquinone. Couples the redox reaction to proton translocation (for every two electrons transferred, four hydrogen ions are translocated across the cytoplasmic membrane), and thus conserves the redox energy in a proton gradient. This chain is NADH-quinone oxidoreductase subunit B, found in Afipia carboxidovorans (strain ATCC 49405 / DSM 1227 / KCTC 32145 / OM5) (Oligotropha carboxidovorans).